The primary structure comprises 566 residues: Arginine--tRNA ligase (566 aa).

Residues 121 to 131 (PNIAKPMSMGH) carry the 'HIGH' region motif.

Belongs to the class-I aminoacyl-tRNA synthetase family. As to quaternary structure, monomer.

It is found in the cytoplasm. The enzyme catalyses tRNA(Arg) + L-arginine + ATP = L-arginyl-tRNA(Arg) + AMP + diphosphate. The protein is Arginine--tRNA ligase of Oenococcus oeni (strain ATCC BAA-331 / PSU-1).